The following is a 294-amino-acid chain: Beta-lactamase SME-1 (294 aa).

Residues Met1–Ala27 form the signal peptide. A disulfide bridge links Cys72 with Cys242. Catalysis depends on Ser73, which acts as the Nucleophile; acyl-ester intermediate. 4 residues coordinate a beta-lactam: Ser73, Lys76, Ser133, and Asn135. Glu172 (proton acceptor) is an active-site residue. A beta-lactam is bound at residue Thr239.

Belongs to the class-A beta-lactamase family.

It catalyses the reaction a beta-lactam + H2O = a substituted beta-amino acid. Its activity is regulated as follows. Partially inhibited by the beta-lactamase-blocking agents, clavulanic acid and tazobactam. Not inhibited by EDTA. Its function is as follows. Class A beta-lactamase which confers resistance to the beta-lactam antibiotics, including penicillins, some cephalosporins and carbapenems, to JM109 strain E.coli. Acts via hydrolysis of the beta-lactam ring. Has penicillin-, cephalosporin- and carbapenem-hydrolyzing activities. The protein is Beta-lactamase SME-1 of Serratia marcescens.